Consider the following 89-residue polypeptide: MPKRILVGTVVSDKTDKTVVVKVERKVKHPLYGKIIRRSKKYHAHDEANAFKTGETVRIEETAPISKLKTWKVIDRVQAGKGTAIEADV.

This sequence belongs to the universal ribosomal protein uS17 family. Part of the 30S ribosomal subunit.

In terms of biological role, one of the primary rRNA binding proteins, it binds specifically to the 5'-end of 16S ribosomal RNA. This chain is Small ribosomal subunit protein uS17, found in Novosphingobium aromaticivorans (strain ATCC 700278 / DSM 12444 / CCUG 56034 / CIP 105152 / NBRC 16084 / F199).